The sequence spans 361 residues: RLA class I histocompatibility antigen, alpha chain 19-1 (361 aa).

Positions 1 to 24 are cleaved as a signal peptide; the sequence is MGSIPPRTLLLLLAGALTLKDTQA. The tract at residues 25–114 is alpha-1; sequence GSHSMRYFYT…ALRYYNQSAA (90 aa). Residues 25–308 are Extracellular-facing; it reads GSHSMRYFYT…EPPAQPTALI (284 aa). Residue asparagine 110 is glycosylated (N-linked (GlcNAc...) asparagine). Residues 115–206 are alpha-2; sequence GSHTFQTMFG…EMGKETLQRA (92 aa). Intrachain disulfides connect cysteine 125–cysteine 188 and cysteine 227–cysteine 283. An alpha-3 region spans residues 207-298; that stretch reads DPPKAHVTHH…GLPEPLTLTW (92 aa). One can recognise an Ig-like C1-type domain in the interval 209-297; it reads PKAHVTHHPA…EGLPEPLTLT (89 aa). The interval 299–308 is connecting peptide; it reads EPPAQPTALI. A helical membrane pass occupies residues 309–329; that stretch reads VGIVAGVLGVLLILGAVVAVV. Topologically, residues 330 to 361 are cytoplasmic; that stretch reads RRKKHSSDGKGGRYTPAAGGHRDQGSDDSLMP. The segment at 335–361 is disordered; it reads SSDGKGGRYTPAAGGHRDQGSDDSLMP. 2 positions are modified to phosphoserine: serine 355 and serine 358.

Belongs to the MHC class I family. As to quaternary structure, heterodimer of an alpha chain and a beta chain (beta-2-microglobulin).

It is found in the membrane. Its function is as follows. Involved in the presentation of foreign antigens to the immune system. In Oryctolagus cuniculus (Rabbit), this protein is RLA class I histocompatibility antigen, alpha chain 19-1.